Reading from the N-terminus, the 270-residue chain is Regulator of G-protein signaling rgs-10 (270 aa).

Residues 135-252 (SPETLAASEY…LEDPLYLDLV (118 aa)) form the RGS domain.

Its function is as follows. Shown to have a role in viability and embryogenesis. This is Regulator of G-protein signaling rgs-10 (rgs-10) from Caenorhabditis elegans.